Here is a 1400-residue protein sequence, read N- to C-terminus: DNA-directed RNA polymerase subunit beta' (1400 aa).

Zn(2+) contacts are provided by C71, C73, C86, and C89. Residues D462, D464, and D466 each coordinate Mg(2+). 4 residues coordinate Zn(2+): C811, C885, C892, and C895.

The protein belongs to the RNA polymerase beta' chain family. As to quaternary structure, the RNAP catalytic core consists of 2 alpha, 1 beta, 1 beta' and 1 omega subunit. When a sigma factor is associated with the core the holoenzyme is formed, which can initiate transcription. The cofactor is Mg(2+). Zn(2+) serves as cofactor.

It catalyses the reaction RNA(n) + a ribonucleoside 5'-triphosphate = RNA(n+1) + diphosphate. DNA-dependent RNA polymerase catalyzes the transcription of DNA into RNA using the four ribonucleoside triphosphates as substrates. In Brucella abortus (strain S19), this protein is DNA-directed RNA polymerase subunit beta'.